The chain runs to 121 residues: Large ribosomal subunit protein uL14 (121 aa).

The protein belongs to the universal ribosomal protein uL14 family. As to quaternary structure, part of the 50S ribosomal subunit. Forms a cluster with proteins L3 and L19. In the 70S ribosome, L14 and L19 interact and together make contacts with the 16S rRNA in bridges B5 and B8.

In terms of biological role, binds to 23S rRNA. Forms part of two intersubunit bridges in the 70S ribosome. The chain is Large ribosomal subunit protein uL14 from Parasynechococcus marenigrum (strain WH8102).